The sequence spans 547 residues: Chaperonin GroEL (547 aa).

Residues 30-33, Lys51, 87-91, Gly415, and Asp496 each bind ATP; these read TLGP and DGTTT. The disordered stretch occupies residues 528–547; sequence KEGAGAGGGMPDMGGMGGMM. The segment covering 531 to 547 has biased composition (gly residues); that stretch reads AGAGGGMPDMGGMGGMM.

The protein belongs to the chaperonin (HSP60) family. As to quaternary structure, forms a cylinder of 14 subunits composed of two heptameric rings stacked back-to-back. Interacts with the co-chaperonin GroES.

The protein resides in the cytoplasm. It catalyses the reaction ATP + H2O + a folded polypeptide = ADP + phosphate + an unfolded polypeptide.. Together with its co-chaperonin GroES, plays an essential role in assisting protein folding. The GroEL-GroES system forms a nano-cage that allows encapsulation of the non-native substrate proteins and provides a physical environment optimized to promote and accelerate protein folding. This chain is Chaperonin GroEL, found in Dinoroseobacter shibae (strain DSM 16493 / NCIMB 14021 / DFL 12).